Consider the following 222-residue polypeptide: Deoxyribose-phosphate aldolase (222 aa).

Aspartate 90 serves as the catalytic Proton donor/acceptor. The active-site Schiff-base intermediate with acetaldehyde is lysine 152. Residue lysine 181 is the Proton donor/acceptor of the active site.

Belongs to the DeoC/FbaB aldolase family. DeoC type 1 subfamily.

Its subcellular location is the cytoplasm. The enzyme catalyses 2-deoxy-D-ribose 5-phosphate = D-glyceraldehyde 3-phosphate + acetaldehyde. It functions in the pathway carbohydrate degradation; 2-deoxy-D-ribose 1-phosphate degradation; D-glyceraldehyde 3-phosphate and acetaldehyde from 2-deoxy-alpha-D-ribose 1-phosphate: step 2/2. Its function is as follows. Catalyzes a reversible aldol reaction between acetaldehyde and D-glyceraldehyde 3-phosphate to generate 2-deoxy-D-ribose 5-phosphate. The chain is Deoxyribose-phosphate aldolase from Pectobacterium atrosepticum (strain SCRI 1043 / ATCC BAA-672) (Erwinia carotovora subsp. atroseptica).